A 156-amino-acid chain; its full sequence is Beta-defensin 125 (156 aa).

An N-terminal signal peptide occupies residues Met-1–Gly-20. Disulfide bonds link Cys-27-Cys-55, Cys-35-Cys-49, and Cys-39-Cys-56. Residues Pro-68–Asn-156 constitute a propeptide that is removed on maturation. The disordered stretch occupies residues Gly-108 to Asn-156. Residues Glu-109–Thr-144 are compositionally biased toward low complexity.

This sequence belongs to the beta-defensin family.

The protein resides in the secreted. In terms of biological role, has antibacterial activity. The polypeptide is Beta-defensin 125 (DEFB125) (Homo sapiens (Human)).